A 395-amino-acid chain; its full sequence is Nicotinate phosphoribosyltransferase (395 aa).

Residue H222 is modified to Phosphohistidine; by autocatalysis.

The protein belongs to the NAPRTase family. In terms of processing, transiently phosphorylated on a His residue during the reaction cycle. Phosphorylation strongly increases the affinity for substrates and increases the rate of nicotinate D-ribonucleotide production. Dephosphorylation regenerates the low-affinity form of the enzyme, leading to product release.

The catalysed reaction is nicotinate + 5-phospho-alpha-D-ribose 1-diphosphate + ATP + H2O = nicotinate beta-D-ribonucleotide + ADP + phosphate + diphosphate. The protein operates within cofactor biosynthesis; NAD(+) biosynthesis; nicotinate D-ribonucleotide from nicotinate: step 1/1. Functionally, catalyzes the synthesis of beta-nicotinate D-ribonucleotide from nicotinate and 5-phospho-D-ribose 1-phosphate at the expense of ATP. In Polaromonas sp. (strain JS666 / ATCC BAA-500), this protein is Nicotinate phosphoribosyltransferase.